Reading from the N-terminus, the 280-residue chain is Ribosomal RNA-processing protein 7 homolog A (280 aa).

Residues 59-159 enclose the RRM domain; the sequence is RTLFVLNVPP…TGIHKWISDY (101 aa). Phosphoserine is present on S99.

Belongs to the RRP7 family. As to quaternary structure, part of the small subunit (SSU) processome, composed of more than 70 proteins and the RNA chaperone small nucleolar RNA (snoRNA) U3. Interacts with NOL6; required for NOL6 localization to nucleolus.

It localises to the nucleus. The protein resides in the nucleolus. The protein localises to the cell projection. It is found in the cilium. Its subcellular location is the cytoplasm. It localises to the cytoskeleton. The protein resides in the microtubule organizing center. The protein localises to the centrosome. Its function is as follows. Nucleolar protein that is involved in ribosomal RNA (rRNA) processing. Also plays a role in primary cilia resorption, and cell cycle progression in neurogenesis and neocortex development. Part of the small subunit (SSU) processome, first precursor of the small eukaryotic ribosomal subunit. During the assembly of the SSU processome in the nucleolus, many ribosome biogenesis factors, an RNA chaperone and ribosomal proteins associate with the nascent pre-rRNA and work in concert to generate RNA folding, modifications, rearrangements and cleavage as well as targeted degradation of pre-ribosomal RNA by the RNA exosome. The sequence is that of Ribosomal RNA-processing protein 7 homolog A (RRP7A) from Pongo abelii (Sumatran orangutan).